A 415-amino-acid polypeptide reads, in one-letter code: Serine hydroxymethyltransferase (415 aa).

(6S)-5,6,7,8-tetrahydrofolate is bound by residues L117 and 121–123 (GHL). An N6-(pyridoxal phosphate)lysine modification is found at K226.

This sequence belongs to the SHMT family. In terms of assembly, homodimer. Requires pyridoxal 5'-phosphate as cofactor.

It localises to the cytoplasm. It carries out the reaction (6R)-5,10-methylene-5,6,7,8-tetrahydrofolate + glycine + H2O = (6S)-5,6,7,8-tetrahydrofolate + L-serine. Its pathway is one-carbon metabolism; tetrahydrofolate interconversion. It functions in the pathway amino-acid biosynthesis; glycine biosynthesis; glycine from L-serine: step 1/1. Catalyzes the reversible interconversion of serine and glycine with tetrahydrofolate (THF) serving as the one-carbon carrier. This reaction serves as the major source of one-carbon groups required for the biosynthesis of purines, thymidylate, methionine, and other important biomolecules. Also exhibits THF-independent aldolase activity toward beta-hydroxyamino acids, producing glycine and aldehydes, via a retro-aldol mechanism. The sequence is that of Serine hydroxymethyltransferase from Leptospira interrogans serogroup Icterohaemorrhagiae serovar copenhageni (strain Fiocruz L1-130).